Here is a 420-residue protein sequence, read N- to C-terminus: Bone morphogenetic protein 2 (420 aa).

Positions 1–23 are cleaved as a signal peptide; the sequence is MVAVVRSLMVLLLAQVLLEGATG. The propeptide occupies 24–303; sequence LIPEVGRRRY…DSVLHTREKR (280 aa). N-linked (GlcNAc...) asparagine glycans are attached at residues asparagine 138, asparagine 167, asparagine 168, asparagine 172, and asparagine 362. Intrachain disulfides connect cysteine 320–cysteine 385, cysteine 349–cysteine 417, and cysteine 353–cysteine 419.

It belongs to the TGF-beta family. In terms of assembly, homodimer; disulfide-linked.

It localises to the secreted. Functionally, induces cartilage and bone formation. The chain is Bone morphogenetic protein 2 (bmp2) from Tetraodon nigroviridis (Spotted green pufferfish).